The following is a 189-amino-acid chain: Interferon alpha-4 (189 aa).

The first 23 residues, 1–23 (MALSFSLLMAVLVLSYKSICSLG), serve as a signal peptide directing secretion. Cystine bridges form between Cys24-Cys122 and Cys52-Cys162.

Belongs to the alpha/beta interferon family.

It localises to the secreted. Produced by macrophages, IFN-alpha have antiviral activities. Interferon stimulates the production of two enzymes: a protein kinase and an oligoadenylate synthetase. This chain is Interferon alpha-4 (IFNA4), found in Homo sapiens (Human).